Consider the following 1863-residue polypeptide: 5'-3' DNA helicase ZGRF1 (1863 aa).

Disordered regions lie at residues 78–110 (SRAVEPDGSREALESGSRTLVSSSRSLGCQPSG), 132–196 (ENSE…PLSL), and 300–349 (TQSI…PEAQ). Positions 81–90 (VEPDGSREAL) are enriched in basic and acidic residues. Low complexity predominate over residues 92–105 (SGSRTLVSSSRSLG). Composition is skewed to polar residues over residues 173-185 (PVSTDNQSPITFS) and 300-321 (TQSIGNLRCEQQSENPTRTTSR). 2 positions are modified to phosphoserine: S331 and S445. Disordered regions lie at residues 460 to 496 (PVSPLPEIGHKQTEVEASLSTSSRISDDIADMGSKSN), 524 to 545 (TSDTDEASQEDSRLSQDSERWE), and 610 to 664 (GDVK…GVSP). A compositionally biased stretch (basic and acidic residues) spans 533–545 (EDSRLSQDSERWE). Zn(2+) is bound by residues C1111, H1113, C1136, and C1144. The GRF-type zinc-finger motif lies at 1111-1153 (CHHNQPAKLVMVKKEGPNKGRLFYTCDKSKDNQCKFFKWLEEV).

In terms of assembly, interacts with DNA repair protein RAD51; the interaction promotes RAD51 strand exchange activity. Also interacts with DNA repair proteins EXO1 and BRCA1; the interactions are increased following DNA damage induction.

The protein resides in the nucleus. It catalyses the reaction ATP + H2O = ADP + phosphate + H(+). The catalysed reaction is Couples ATP hydrolysis with the unwinding of duplex DNA at the replication fork by translocating in the 5'-3' direction. This creates two antiparallel DNA single strands (ssDNA). The leading ssDNA polymer is the template for DNA polymerase III holoenzyme which synthesizes a continuous strand.. In terms of biological role, 5'-3' DNA helicase which is recruited to sites of DNA damage and promotes repair of replication-blocking DNA lesions through stimulation of homologous recombination (HR). Promotes HR by directly stimulating RAD51-mediated strand exchange activity. Not required to load RAD51 at sites of DNA damage but promotes recombinational repair after RAD51 recruitment. Also promotes HR by positively regulating EXO1-mediated DNA end resection of DNA double-strand breaks. Required for recruitment of replication protein RPA2 to DNA damage sites. Promotes the initiation of the G2/M checkpoint but not its maintenance. Catalyzes Holliday junction branch migration and dissociation of D-loops and DNA flaps. This is 5'-3' DNA helicase ZGRF1 (Zgrf1) from Mus musculus (Mouse).